The following is a 293-amino-acid chain: Elongation factor Ts (293 aa).

Residues 79–82 form an involved in Mg(2+) ion dislocation from EF-Tu region; sequence TDFV.

Belongs to the EF-Ts family.

The protein resides in the cytoplasm. Functionally, associates with the EF-Tu.GDP complex and induces the exchange of GDP to GTP. It remains bound to the aminoacyl-tRNA.EF-Tu.GTP complex up to the GTP hydrolysis stage on the ribosome. This is Elongation factor Ts (tsf) from Halalkalibacterium halodurans (strain ATCC BAA-125 / DSM 18197 / FERM 7344 / JCM 9153 / C-125) (Bacillus halodurans).